A 253-amino-acid polypeptide reads, in one-letter code: DNA repair protein RecO (253 aa).

Belongs to the RecO family.

Involved in DNA repair and RecF pathway recombination. This chain is DNA repair protein RecO, found in Streptococcus agalactiae serotype Ia (strain ATCC 27591 / A909 / CDC SS700).